A 166-amino-acid polypeptide reads, in one-letter code: Anterior gradient protein 3 (166 aa).

Positions 1-21 (MMLHSALGLCLLLVTVSSNLA) are cleaved as a signal peptide. The short motif at 163-166 (QSEL) is the Prevents secretion from ER element.

The protein belongs to the AGR family. In terms of assembly, interacts with LYPD3 and DAG1 (alphaDAG1). In terms of tissue distribution, expressed in the lung, in the ciliated cells of the airway epithelium. Expression increased with differentiation of airway epithelial cells. Not detected in the mucous cells. Expressed in ciliated cells in the oviduct. Also detected in stomach, colon, prostate and liver. Expressed in breast, ovary, prostate and liver cancer. Expression is associated with the level of differentiation of breast cancer (at protein level).

The protein localises to the endoplasmic reticulum. Required for calcium-mediated regulation of ciliary beat frequency and mucociliary clearance in the airway. Might be involved in the regulation of intracellular calcium in tracheal epithelial cells. This is Anterior gradient protein 3 (AGR3) from Homo sapiens (Human).